We begin with the raw amino-acid sequence, 519 residues long: Ribonuclease Y (519 aa).

Residues 3 to 23 form a helical membrane-spanning segment; that stretch reads LMIFAYIAIGAVLGAGTGYLL. Residues 209–272 enclose the KH domain; sequence TVTAVTLPSE…QVAKMALERL (64 aa). Positions 335–428 constitute an HD domain; it reads VLQHSLEVSA…VQAADSISGA (94 aa).

This sequence belongs to the RNase Y family.

It is found in the cell membrane. Functionally, endoribonuclease that initiates mRNA decay. The protein is Ribonuclease Y of Nitratidesulfovibrio vulgaris (strain ATCC 29579 / DSM 644 / CCUG 34227 / NCIMB 8303 / VKM B-1760 / Hildenborough) (Desulfovibrio vulgaris).